An 87-amino-acid polypeptide reads, in one-letter code: MSTSVPQGHNWTRPVKKDDDEEDPLDQLITRSGCAASHFAVQECMAQHQDWRQCQPQVQAFRDCMSAQQARRREELQRRKEQASAQH.

Positions 1–10 (MSTSVPQGHN) are enriched in polar residues. The segment at 1-24 (MSTSVPQGHNWTRPVKKDDDEEDP) is disordered. Residues 31–72 (RSGCAASHFAVQECMAQHQDWRQCQPQVQAFRDCMSAQQARR) enclose the CHCH domain. 2 consecutive short sequence motifs (cx9C motif) follow at residues 34–44 (CAASHFAVQEC) and 54–64 (CQPQVQAFRDC). 2 disulfides stabilise this stretch: C34–C64 and C44–C54. The disordered stretch occupies residues 68–87 (QQARRREELQRRKEQASAQH). Residues 71-87 (RRREELQRRKEQASAQH) show a composition bias toward basic and acidic residues.

Belongs to the COA4 family.

It localises to the mitochondrion. Putative COX assembly factor. The protein is Cytochrome c oxidase assembly factor 4 homolog, mitochondrial (COA4) of Mus musculus (Mouse).